We begin with the raw amino-acid sequence, 228 residues long: Ornithine decarboxylase antizyme 1 (228 aa).

The disordered stretch occupies residues 17 to 55; that stretch reads REKEGDKPSATIHASRTMPLLSLHSRGGSSSESSRVSLH. Positions 36 to 55 are enriched in low complexity; it reads LLSLHSRGGSSSESSRVSLH.

This sequence belongs to the ODC antizyme family. As to quaternary structure, interacts with ODC1 and thereby sterically blocks ODC homodimerization. Forms a ternary complex with PSMB4 and OAZ1 before PSMB4 is incorporated into the 20S proteasome. Interacts with AZIN2; this interaction disrupts the interaction between the antizyme and ODC1. Interacts with FAM171A1.

In terms of biological role, ornithine decarboxylase (ODC) antizyme protein that negatively regulates ODC activity and intracellular polyamine biosynthesis and uptake in response to increased intracellular polyamine levels. Binds to ODC monomers, inhibiting the assembly of the functional ODC homodimer, and targets the monomers for ubiquitin-independent proteolytic destruction by the 26S proteasome. Triggers ODC degradation by inducing the exposure of a cryptic proteasome-interacting surface of ODC. Stabilizes AZIN2 by interfering with its ubiquitination. Also inhibits cellular uptake of polyamines by inactivating the polyamine uptake transporter. SMAD1/OAZ1/PSMB4 complex mediates the degradation of the CREBBP/EP300 repressor SNIP1. Involved in the translocation of AZIN2 from ER-Golgi intermediate compartment (ERGIC) to the cytosol. This Homo sapiens (Human) protein is Ornithine decarboxylase antizyme 1 (OAZ1).